Consider the following 826-residue polypeptide: BLOC-2 complex member HPS5 homolog (826 aa).

WD repeat units follow at residues 22–61 (KHHN…LLLI), 63–102 (NKHG…QATP), and 110–149 (DQSV…GHSL). A compositionally biased stretch (polar residues) spans 422 to 446 (ALDTHSSGGSSATTERSLSGGSSSR). Residues 422 to 447 (ALDTHSSGGSSATTERSLSGGSSSRA) form a disordered region.

Belongs to the HPS5 family. Expressed in eye pigment granules.

In terms of biological role, has a role in the biogenesis of eye pigment granules. Eye pigment granules are specialized forms of late endosomes or lysosomes. Biogenesis of pigment granules in the eye requires molecular components required for protein delivery to lysosomes. In Drosophila melanogaster (Fruit fly), this protein is BLOC-2 complex member HPS5 homolog.